A 185-amino-acid chain; its full sequence is Ribosome-recycling factor (185 aa).

This sequence belongs to the RRF family.

Its subcellular location is the cytoplasm. Functionally, responsible for the release of ribosomes from messenger RNA at the termination of protein biosynthesis. May increase the efficiency of translation by recycling ribosomes from one round of translation to another. The sequence is that of Ribosome-recycling factor from Listeria welshimeri serovar 6b (strain ATCC 35897 / DSM 20650 / CCUG 15529 / CIP 8149 / NCTC 11857 / SLCC 5334 / V8).